A 228-amino-acid chain; its full sequence is GDT1-like protein 5 (228 aa).

At glycine 2 the chain carries N-acetylglycine. A run of 6 helical transmembrane segments spans residues 12–32 (LAMTFLSEIGDKTFFAAAILA), 39–59 (LVLAGCLSALIVMTILSATLG), 71–91 (THHITTFLFFGFGLWSLWDGF), 133–153 (PFLTAFFSPIFLKAFSINFFG), 173–193 (LGVVLGGIVAQTLCTTAAVLG), and 205–225 (IVALSGGMLFIIFGIQSLLTP).

Belongs to the GDT1 family.

It is found in the membrane. The sequence is that of GDT1-like protein 5 from Arabidopsis thaliana (Mouse-ear cress).